Here is a 636-residue protein sequence, read N- to C-terminus: Biosynthetic arginine decarboxylase (636 aa).

Lysine 101 bears the N6-(pyridoxal phosphate)lysine mark. 286-296 (FDVGGGLAVDY) provides a ligand contact to substrate.

The protein belongs to the Orn/Lys/Arg decarboxylase class-II family. SpeA subfamily. Mg(2+) serves as cofactor. The cofactor is pyridoxal 5'-phosphate.

It catalyses the reaction L-arginine + H(+) = agmatine + CO2. The protein operates within amine and polyamine biosynthesis; agmatine biosynthesis; agmatine from L-arginine: step 1/1. Catalyzes the biosynthesis of agmatine from arginine. The sequence is that of Biosynthetic arginine decarboxylase from Shewanella frigidimarina (strain NCIMB 400).